The sequence spans 151 residues: Hemoglobin-2 (151 aa).

At Thr2 the chain carries N-acetylthreonine. One can recognise a Globin domain in the interval 3 to 148 (TLTNPQKAAI…ICKTLGDYMK (146 aa)). Residue His97 participates in heme b binding.

The protein belongs to the globin family. Homotetramer.

It localises to the cytoplasm. This chain is Hemoglobin-2, found in Phacoides pectinatus (Thick lucine).